A 290-amino-acid polypeptide reads, in one-letter code: Probable prolyl 4-hydroxylase 8 (290 aa).

Over Met-1–Gln-19 the chain is Cytoplasmic. A helical; Signal-anchor for type II membrane protein membrane pass occupies residues Thr-20 to Phe-40. The Lumenal portion of the chain corresponds to Ser-41 to Asn-290. Asn-46 is a glycosylation site (N-linked (GlcNAc...) asparagine). The Fe2OG dioxygenase domain maps to Asn-163–Val-286. Fe cation is bound by residues His-181 and Asp-183. Residue Asn-222 is glycosylated (N-linked (GlcNAc...) asparagine). His-267 contacts Fe cation. Lys-277 is a 2-oxoglutarate binding site.

Belongs to the P4HA family. Fe(2+) is required as a cofactor. It depends on L-ascorbate as a cofactor.

It is found in the endoplasmic reticulum membrane. The enzyme catalyses L-prolyl-[collagen] + 2-oxoglutarate + O2 = trans-4-hydroxy-L-prolyl-[collagen] + succinate + CO2. In terms of biological role, catalyzes the post-translational formation of 4-hydroxyproline in -Xaa-Pro-Gly- sequences in proline-rich peptide sequences of plant glycoproteins and other proteins. Hydroxyprolines are important constituent of many plant cell wall glycoproteins such as extensins, hydroxyproline-rich glycoproteins, lectins and arabinogalactan proteins. This chain is Probable prolyl 4-hydroxylase 8, found in Arabidopsis thaliana (Mouse-ear cress).